The primary structure comprises 367 residues: Cobalt-precorrin-5B C(1)-methyltransferase (367 aa).

The protein belongs to the CbiD family.

It carries out the reaction Co-precorrin-5B + S-adenosyl-L-methionine = Co-precorrin-6A + S-adenosyl-L-homocysteine. It participates in cofactor biosynthesis; adenosylcobalamin biosynthesis; cob(II)yrinate a,c-diamide from sirohydrochlorin (anaerobic route): step 6/10. Catalyzes the methylation of C-1 in cobalt-precorrin-5B to form cobalt-precorrin-6A. This Leptospira interrogans serogroup Icterohaemorrhagiae serovar copenhageni (strain Fiocruz L1-130) protein is Cobalt-precorrin-5B C(1)-methyltransferase.